A 260-amino-acid chain; its full sequence is Trialysin (260 aa).

The first 19 residues, 1 to 19 (MSKFWLLLLLVAAFQFAHS), serve as a signal peptide directing secretion. Residues 20–55 (YPAAEYELDETTNDEVRQFIGDGYFEDEGDDGDEER) constitute a propeptide, removed in mature form, probably by the serine protease triapsin.

Belongs to the redulysin-like family. Expressed in salivary glands.

It is found in the secreted. The protein resides in the target cell membrane. Pore-forming protein that induces lysis of T.cruzi trypomastigotes, bacteria E.coli and human red blood cells. The parasite lysis is much more important than the hemolysis, probably due to difference in membrane composition. Its action on protozoan parasites and bacteria may indicate a role in the control of microorganism growth in the salivary glands. The protein is Trialysin of Triatoma infestans (Assassin bug).